Reading from the N-terminus, the 431-residue chain is Gamma-glutamyl phosphate reductase (431 aa).

This sequence belongs to the gamma-glutamyl phosphate reductase family.

It is found in the cytoplasm. The enzyme catalyses L-glutamate 5-semialdehyde + phosphate + NADP(+) = L-glutamyl 5-phosphate + NADPH + H(+). It functions in the pathway amino-acid biosynthesis; L-proline biosynthesis; L-glutamate 5-semialdehyde from L-glutamate: step 2/2. Functionally, catalyzes the NADPH-dependent reduction of L-glutamate 5-phosphate into L-glutamate 5-semialdehyde and phosphate. The product spontaneously undergoes cyclization to form 1-pyrroline-5-carboxylate. This chain is Gamma-glutamyl phosphate reductase, found in Bifidobacterium longum subsp. infantis (strain ATCC 15697 / DSM 20088 / JCM 1222 / NCTC 11817 / S12).